Consider the following 325-residue polypeptide: Tetraacyldisaccharide 4'-kinase (325 aa).

55-62 lines the ATP pocket; the sequence is TAGGNGKT.

This sequence belongs to the LpxK family.

The catalysed reaction is a lipid A disaccharide + ATP = a lipid IVA + ADP + H(+). Its pathway is glycolipid biosynthesis; lipid IV(A) biosynthesis; lipid IV(A) from (3R)-3-hydroxytetradecanoyl-[acyl-carrier-protein] and UDP-N-acetyl-alpha-D-glucosamine: step 6/6. Its function is as follows. Transfers the gamma-phosphate of ATP to the 4'-position of a tetraacyldisaccharide 1-phosphate intermediate (termed DS-1-P) to form tetraacyldisaccharide 1,4'-bis-phosphate (lipid IVA). This chain is Tetraacyldisaccharide 4'-kinase, found in Salmonella choleraesuis (strain SC-B67).